The following is a 467-amino-acid chain: Cysteine protease ATG4a (467 aa).

Residues 1–35 (MKALCDRFVPQQCSSSSKSDTHDKSPLVSDSGPSD) form a disordered region. Residue C170 is the Nucleophile of the active site. Catalysis depends on residues D364 and H366. The segment at 448-467 (NYGFADDDSEDEREDDWQML) is disordered. Acidic residues predominate over residues 452 to 467 (ADDDSEDEREDDWQML).

Belongs to the peptidase C54 family. As to quaternary structure, interacts with ATG8. As to expression, constitutively expressed.

Its subcellular location is the cytoplasm. It catalyses the reaction [protein]-C-terminal L-amino acid-glycyl-phosphatidylethanolamide + H2O = [protein]-C-terminal L-amino acid-glycine + a 1,2-diacyl-sn-glycero-3-phosphoethanolamine. Cysteine protease that plays a key role in autophagy by mediating both proteolytic activation and delipidation of ATG8 family proteins. The protease activity is required for proteolytic activation of ATG8 family proteins: cleaves the C-terminal amino acid of ATG8 proteins to reveal a C-terminal glycine. Exposure of the glycine at the C-terminus is essential for ATG8 proteins conjugation to phosphatidylethanolamine (PE) and insertion to membranes, which is necessary for autophagy. In addition to the protease activity, also mediates delipidation of PE-conjugated ATG8 proteins. The sequence is that of Cysteine protease ATG4a from Arabidopsis thaliana (Mouse-ear cress).